Consider the following 360-residue polypeptide: Phospho-N-acetylmuramoyl-pentapeptide-transferase (360 aa).

10 helical membrane passes run 18–38, 73–93, 97–117, 135–155, 168–188, 199–219, 236–256, 263–283, 288–308, and 339–359; these read VFSY…MMSL, TMGG…WADL, YVWA…VDDY, FWQS…STQA, VLPQ…VGTS, GLAI…AYLT, ASEL…FLWF, VFMG…IAVL, LLLI…ILQV, and IVRF…TLKI.

Belongs to the glycosyltransferase 4 family. MraY subfamily. Requires Mg(2+) as cofactor.

Its subcellular location is the cell inner membrane. The enzyme catalyses UDP-N-acetyl-alpha-D-muramoyl-L-alanyl-gamma-D-glutamyl-meso-2,6-diaminopimeloyl-D-alanyl-D-alanine + di-trans,octa-cis-undecaprenyl phosphate = di-trans,octa-cis-undecaprenyl diphospho-N-acetyl-alpha-D-muramoyl-L-alanyl-D-glutamyl-meso-2,6-diaminopimeloyl-D-alanyl-D-alanine + UMP. It functions in the pathway cell wall biogenesis; peptidoglycan biosynthesis. Its function is as follows. Catalyzes the initial step of the lipid cycle reactions in the biosynthesis of the cell wall peptidoglycan: transfers peptidoglycan precursor phospho-MurNAc-pentapeptide from UDP-MurNAc-pentapeptide onto the lipid carrier undecaprenyl phosphate, yielding undecaprenyl-pyrophosphoryl-MurNAc-pentapeptide, known as lipid I. The sequence is that of Phospho-N-acetylmuramoyl-pentapeptide-transferase from Pseudoalteromonas translucida (strain TAC 125).